The chain runs to 132 residues: ATP synthase epsilon chain, chloroplastic (132 aa).

Threonine 2 is subject to N-acetylthreonine.

This sequence belongs to the ATPase epsilon chain family. F-type ATPases have 2 components, CF(1) - the catalytic core - and CF(0) - the membrane proton channel. CF(1) has five subunits: alpha(3), beta(3), gamma(1), delta(1), epsilon(1). CF(0) has three main subunits: a, b and c.

Its subcellular location is the plastid. It localises to the chloroplast thylakoid membrane. In terms of biological role, produces ATP from ADP in the presence of a proton gradient across the membrane. The chain is ATP synthase epsilon chain, chloroplastic from Arabidopsis thaliana (Mouse-ear cress).